Reading from the N-terminus, the 540-residue chain is Probable H/ACA ribonucleoprotein complex subunit 4 (540 aa).

Residues M1–K24 form a disordered region. D109 acts as the Nucleophile in catalysis. The PUA domain maps to Y280–M355. Residues S414–N540 are disordered. Residues K448–D494 are a coiled coil. Over residues K473–K489 the composition is skewed to basic residues. Basic and acidic residues-rich tracts occupy residues S490–E503 and S513–D528. Residues K529–N540 show a composition bias toward basic residues.

Belongs to the pseudouridine synthase TruB family. As to quaternary structure, component of the small nucleolar ribonucleoprotein particles containing H/ACA-type snoRNAs (H/ACA snoRNPs).

Its subcellular location is the nucleus. The protein localises to the nucleolus. The catalysed reaction is a uridine in RNA = a pseudouridine in RNA. Plays a central role in ribosomal RNA processing. Probable catalytic subunit of H/ACA small nucleolar ribonucleoprotein (H/ACA snoRNP) complex, which catalyzes pseudouridylation of rRNA. This involves the isomerization of uridine such that the ribose is subsequently attached to C5, instead of the normal N1. Pseudouridine ('psi') residues may serve to stabilize the conformation of rRNAs. The chain is Probable H/ACA ribonucleoprotein complex subunit 4 (nola4) from Dictyostelium discoideum (Social amoeba).